Here is a 458-residue protein sequence, read N- to C-terminus: Elongation factor 1-alpha (458 aa).

Position 2 is a n,N,N-trimethylglycine; by EFM7 (Gly2). Residue Lys3 is modified to N6,N6-dimethyllysine; by EFM7; alternate. Lys3 is subject to N6-methyllysine; by EFM7; alternate. A tr-type G domain is found at 5–240; it reads KSHINVVVIG…DAIEQPSRPT (236 aa). A G1 region spans residues 14-21; it reads GHVDSGKS. Ser18 bears the Phosphoserine mark. GTP is bound by residues Ser21 and Thr22. The residue at position 30 (Lys30) is an N6-methyllysine; by EFM1. The segment at 70–74 is G2; sequence GITID. Thr72 is modified (phosphothreonine). N6,N6,N6-trimethyllysine; by EFM5 is present on Lys79. Position 82 is a phosphothreonine (Thr82). Positions 91 to 94 are G3; sequence DAPG. Asn153, Lys154, and Asp156 together coordinate GTP. The G4 stretch occupies residues 153 to 156; that stretch reads NKMD. Ser163 bears the Phosphoserine mark. Ser192, Gly193, and Trp194 together coordinate GTP. The segment at 192–194 is G5; the sequence is SGW. Residues Lys224, Lys242, and Lys253 each participate in a glycyl lysine isopeptide (Lys-Gly) (interchain with G-Cter in ubiquitin) cross-link. Thr259 carries the phosphothreonine modification. Lys271 is covalently cross-linked (Glycyl lysine isopeptide (Lys-Gly) (interchain with G-Cter in ubiquitin)). Position 289 is a phosphoserine (Ser289). Residue Lys316 is modified to N6,N6-dimethyllysine; by EFM4; alternate. An N6-methyllysine; by EFM4; alternate modification is found at Lys316. Lys390 is modified (N6-methyllysine; by EFM6). Residue Lys393 forms a Glycyl lysine isopeptide (Lys-Gly) (interchain with G-Cter in ubiquitin) linkage. Ser414 carries the post-translational modification Phosphoserine. Thr430 bears the Phosphothreonine mark. A Glycyl lysine isopeptide (Lys-Gly) (interchain with G-Cter in ubiquitin) cross-link involves residue Lys437. The residue at position 458 (Lys458) is a Lysine methyl ester.

The protein belongs to the TRAFAC class translation factor GTPase superfamily. Classic translation factor GTPase family. EF-Tu/EF-1A subfamily. The eukaryotic elongation factor 1 complex (eEF1) is probably a heterohexamer. Two trimeric complexes, each composed of eEF1A (TEF1 or TEF2), eEF1Balpha (EFB1) and eEF1Bgamma (CAM1 or TEF4), are probably dimerized via the eF1Bgamma subunits. Interacts with eEF1Balpha; the interaction is direct. Interacts with GCN2 (via C-terminus); this interaction is direct, occurs in amino acid-repleted cells, may be stabilized in a ribosome-dependent manner, reduces GCN2-mediated eIF-2-alpha phosphorylation and is lost in amino acid-starved cells and by uncharged tRNAs. Interacts with CEX1. Interacts with elongation factor 3 (YEF3 or HEF3). Interacts with NAP1. Interacts with SRV2. Interacts with chaperone ZPR1; the interaction is required for its proper folding. Binds to actin and forms a ternary complex with BNI1 and profilin. Interacts with the proteasome, probably via RPT1. Associates with ribosomes. In terms of processing, S-thiolated in response to oxidative stress, probably inhibiting the protein and causing a reduction in protein synthesis. Glutaminylated at Glu-45. An L-glutamine is linked to Glu-45 via the alpha amino group. This glutaminylation is yeast-specific and not essential for the normal functions of eEF1A. However, eEF1A glutaminylation slightly reduced growth under antibiotic-induced translational stress conditions.

It localises to the cytoplasm. The protein resides in the cytoskeleton. It participates in protein biosynthesis; polypeptide chain elongation. With respect to regulation, inhibited by narciclasine. Functionally, GTP-binding component of the eukaryotic elongation factor 1 complex (eEF1). In its active GTP-bound form, binds to and delivers aminoacyl-tRNA to the A-site of ribosomes during protein biosynthesis. In the presence of a correct codon-anticodon match between the aminoacyl-tRNA and the A-site codon of the ribosome-bound mRNA, the ribosome acts as a GTPase activator and the GTP is hydrolyzed. The inactive GDP-bound form leaves the ribosome and must be recycled by its guanine nucleotide exchange factor (GEF) (eEF1B subcomplex) before binding another molecule of aminoacyl-tRNA. Required for nuclear export of aminoacyl-tRNAs. May also be involved in translational quality control by targeting cotranslationally damaged proteins to the proteasome. Also exhibits actin filament-binding and -bundling activities and is involved in cytoskeleton organization. Plays a role as a negative regulator of GCN2 kinase activity by inhibiting GCN2-mediated eIF-2-alpha phosphorylation in amino acid-repleted cells. The sequence is that of Elongation factor 1-alpha (TEF1) from Saccharomyces cerevisiae (strain ATCC 204508 / S288c) (Baker's yeast).